Consider the following 225-residue polypeptide: ATP-dependent dethiobiotin synthetase BioD (225 aa).

13-18 (NVGKTL) provides a ligand contact to ATP. Thr17 is a binding site for Mg(2+). Residue Lys38 is part of the active site. Residue Thr42 participates in substrate binding. ATP is bound by residues Asp55, 116 to 119 (EGAG), 176 to 177 (NH), and 205 to 207 (PWL). The Mg(2+) site is built by Asp55 and Glu116.

It belongs to the dethiobiotin synthetase family. As to quaternary structure, homodimer. The cofactor is Mg(2+).

The protein localises to the cytoplasm. It carries out the reaction (7R,8S)-7,8-diammoniononanoate + CO2 + ATP = (4R,5S)-dethiobiotin + ADP + phosphate + 3 H(+). Its pathway is cofactor biosynthesis; biotin biosynthesis; biotin from 7,8-diaminononanoate: step 1/2. Its function is as follows. Catalyzes a mechanistically unusual reaction, the ATP-dependent insertion of CO2 between the N7 and N8 nitrogen atoms of 7,8-diaminopelargonic acid (DAPA, also called 7,8-diammoniononanoate) to form a ureido ring. This is ATP-dependent dethiobiotin synthetase BioD from Baumannia cicadellinicola subsp. Homalodisca coagulata.